A 220-amino-acid polypeptide reads, in one-letter code: Large ribosomal subunit protein uL16z (220 aa).

Belongs to the universal ribosomal protein uL16 family. As to quaternary structure, component of the small ribosomal subunit. Mature ribosomes consist of a small (40S) and a large (60S) subunit. The 40S subunit contains about 33 different proteins and 1 molecule of RNA (18S). The 60S subunit contains about 49 different proteins and 3 molecules of RNA (25S, 5.8S and 5S). Interacts with NIK1. Interacts with LIMYB. Post-translationally, phosphorylated by NIK1 and NIK2 in vitro. As to expression, ubiquitous, with the highest expression in flowers. Expressed in seedlings, leaves, roots, stems and flowers. Expressed in young leaves, mostly in dividing cells and in the hydathodes, in the root tips and lateral root primordia, in pistils, anthers, and pollen grains, and in developing seeds.

The protein resides in the cytoplasm. The protein localises to the nucleus. Ribosomal protein involved in translational regulation. Contribute to general translation under UV-B stress. Involved in the NIK1-mediated defense response to geminivirus infection. Acts coordinately with LIMYB as a transcriptional repressor. This chain is Large ribosomal subunit protein uL16z, found in Arabidopsis thaliana (Mouse-ear cress).